Consider the following 371-residue polypeptide: GDSL esterase/lipase At3g27950 (371 aa).

The N-terminal stretch at 1–23 (MAISKITLAIIVLLLGFTEKLSA) is a signal peptide. Ser39 serves as the catalytic Nucleophile. N-linked (GlcNAc...) asparagine glycosylation is found at Asn82, Asn143, Asn178, Asn194, and Asn315. Residues Asp334 and His337 contribute to the active site.

It belongs to the 'GDSL' lipolytic enzyme family.

The protein resides in the secreted. This is GDSL esterase/lipase At3g27950 from Arabidopsis thaliana (Mouse-ear cress).